The primary structure comprises 296 residues: Putative F-box protein At1g67623 (296 aa).

Residues 21–70 enclose the F-box domain; it reads SLCLDSLPEDLLVEISSCTGASSLSAVRNLRLVSKSFRRICDEKYVFYRL.

The chain is Putative F-box protein At1g67623 from Arabidopsis thaliana (Mouse-ear cress).